An 88-amino-acid chain; its full sequence is Apolipoprotein C-I (88 aa).

The N-terminal stretch at 1-26 (MRLILSLPVLAVVLAMVLEGPAPAQA) is a signal peptide.

The protein belongs to the apolipoprotein C1 family.

It localises to the secreted. Functionally, inhibitor of lipoprotein binding to the low density lipoprotein (LDL) receptor, LDL receptor-related protein, and very low density lipoprotein (VLDL) receptor. Associates with high density lipoproteins (HDL) and the triacylglycerol-rich lipoproteins in the plasma and makes up about 10% of the protein of the VLDL and 2% of that of HDL. Appears to interfere directly with fatty acid uptake and is also the major plasma inhibitor of cholesteryl ester transfer protein (CETP). Binds free fatty acids and reduces their intracellular esterification. Modulates the interaction of APOE with beta-migrating VLDL and inhibits binding of beta-VLDL to the LDL receptor-related protein. The chain is Apolipoprotein C-I (APOC1) from Eidolon helvum (Straw-colored fruit bat).